Reading from the N-terminus, the 958-residue chain is Unconventional myosin-Ih (958 aa).

Residues 12-691 (GVQDFVLLDA…TLFATEDAFE (680 aa)) form the Myosin motor domain. Residue 105–112 (GESGAGKT) coordinates ATP. A Phosphoserine modification is found at Ser-365. The interval 568-590 (LSSLLEILISKEPSYIRCIKPNE) is actin-binding. 2 consecutive IQ domains span residues 694–716 (KHQL…EYMK) and 717–746 (KRQA…AVQI). Residues 773–955 (RKNYILNLRY…NGQLRVVSAG (183 aa)) form the TH1 domain.

The protein belongs to the TRAFAC class myosin-kinesin ATPase superfamily. Myosin family. Highly expressed in the central nervous system, including the forebrain, midbrain and lower medulla. In the lower medulla, it is broadly expressed throughout the reticular formation. It is expressed in the retrotrapezoid nucleus and the nucleus of the solitary tract, as well as motor neurons of the facial, vagal and ambiguus nuclei. Expressed in neonatal inner-ear organs.

In terms of biological role, myosins are actin-based motor molecules with ATPase activity. Unconventional myosins serve in intracellular movements. Their highly divergent tails are presumed to bind to membranous compartments, which would be moved relative to actin filaments. This Mus musculus (Mouse) protein is Unconventional myosin-Ih (Myo1h).